The following is a 172-amino-acid chain: Biogenesis of lysosome-related organelles complex 1 subunit 6 (172 aa).

Disordered stretches follow at residues Met1–Glu36 and Arg135–Met172. Positions Asp63–Arg167 form a coiled coil. Residues Arg143–Leu164 show a composition bias toward basic and acidic residues.

It belongs to the BLOC1S6 family. As to quaternary structure, interacts with BLOC1S4 and DTNBP1/BLOC1S7. Homodimer. Component of the biogenesis of lysosome-related organelles complex 1 (BLOC-1) composed of BLOC1S1, BLOC1S2, BLOC1S3, BLOC1S4, BLOC1S5, BLOC1S6, DTNBP1/BLOC1S7 and SNAPIN/BLOC1S8. Octamer composed of one copy each BLOC1S1, BLOC1S2, BLOC1S3, BLOC1S4, BLOC1S5, BLOC1S6, DTNBP1/BLOC1S7 and SNAPIN/BLOC1S8. The BLOC-1 complex associates with the AP-3 protein complex and membrane protein cargos. Interacts with BLOC1S5, F-actin, SNAP25 isoform 1 and isoform 2, SNAP47 and STX12. Post-translationally, phosphorylated. In terms of tissue distribution, widely expressed.

It localises to the cytoplasm. The protein localises to the membrane. In terms of biological role, component of the BLOC-1 complex, a complex that is required for normal biogenesis of lysosome-related organelles (LRO), such as platelet dense granules and melanosomes. In concert with the AP-3 complex, the BLOC-1 complex is required to target membrane protein cargos into vesicles assembled at cell bodies for delivery into neurites and nerve terminals. The BLOC-1 complex, in association with SNARE proteins, is also proposed to be involved in neurite extension. May play a role in intracellular vesicle trafficking, particularly in the vesicle-docking and fusion process. The polypeptide is Biogenesis of lysosome-related organelles complex 1 subunit 6 (BLOC1S6) (Homo sapiens (Human)).